Reading from the N-terminus, the 308-residue chain is Very-long-chain enoyl-CoA reductase (308 aa).

At 1-86 the chain is on the cytoplasmic side; sequence MKHYEVEIRD…YFRDLGAQIS (86 aa). Residue Lys22 is modified to N6-acetyllysine. Position 58 is a phosphoserine (Ser58). Lys60 is subject to N6-acetyllysine. A helical transmembrane segment spans residues 87–106; it reads WVTVFLTEYAGPLFIYLLFY. Residues 107–124 are Lumenal-facing; that stretch reads FRVPFIYGRKYDFTSSRH. Residues 125 to 147 form a helical membrane-spanning segment; it reads TVVHLACMCHSFHYIKRLLETLF. Topologically, residues 148–158 are cytoplasmic; sequence VHRFSHGTMPL. Residues 159–180 form a helical membrane-spanning segment; the sequence is RNIFKNCTYYWGFAAWMAYYIN. Over 181 to 189 the chain is Lumenal; that stretch reads HPLYTPPTY. The helical transmembrane segment at 190-216 threads the bilayer; it reads GVQQVKLALAIFVICQLGNFSIHMALR. Residues 217 to 245 are Cytoplasmic-facing; sequence DLRPAGSKTRKIPYPTKNPFTWLFLLVSC. A helical transmembrane segment spans residues 246–262; the sequence is PNYTYEVGSWIGFAIMT. Over 263-264 the chain is Lumenal; the sequence is QC. A helical membrane pass occupies residues 265–292; that stretch reads VPVALFSLVGFTQMTIWAKGKHRSYLKE. The Cytoplasmic portion of the chain corresponds to 293 to 308; the sequence is FRDYPPLRMPIIPFLL.

This sequence belongs to the steroid 5-alpha reductase family. As to quaternary structure, interacts with ELOVL1 and LASS2. Glycosylated. As to expression, expressed at high levels in brain and is also found at lower levels in several other tissues.

The protein localises to the endoplasmic reticulum membrane. The catalysed reaction is a very-long-chain 2,3-saturated fatty acyl-CoA + NADP(+) = a very-long-chain (2E)-enoyl-CoA + NADPH + H(+). It carries out the reaction octadecanoyl-CoA + NADP(+) = (2E)-octadecenoyl-CoA + NADPH + H(+). It catalyses the reaction (2E,7Z,10Z,13Z,16Z)-docosapentaenoyl-CoA + NADPH + H(+) = (7Z,10Z,13Z,16Z)-docosatetraenoyl-CoA + NADP(+). The enzyme catalyses (2E,7Z,10Z,13Z,16Z,19Z)-docosahexaenoyl-CoA + NADPH + H(+) = (7Z,10Z,13Z,16Z,19Z)-docosapentaenoyl-CoA + NADP(+). The catalysed reaction is (2E,8Z,11Z,14Z)-eicosatetraenoyl-CoA + NADPH + H(+) = (8Z,11Z,14Z)-eicosatrienoyl-CoA + NADP(+). It carries out the reaction (2E)-hexadecenoyl-CoA + NADPH + H(+) = hexadecanoyl-CoA + NADP(+). The protein operates within lipid metabolism; fatty acid biosynthesis. It participates in lipid metabolism; sphingolipid metabolism. Functionally, involved in both the production of very long-chain fatty acids for sphingolipid synthesis and the degradation of the sphingosine moiety in sphingolipids through the sphingosine 1-phosphate metabolic pathway. Catalyzes the last of the four reactions of the long-chain fatty acids elongation cycle. This endoplasmic reticulum-bound enzymatic process, allows the addition of 2 carbons to the chain of long- and very long-chain fatty acids/VLCFAs per cycle. This enzyme reduces the trans-2,3-enoyl-CoA fatty acid intermediate to an acyl-CoA that can be further elongated by entering a new cycle of elongation. Thereby, it participates in the production of VLCFAs of different chain lengths that are involved in multiple biological processes as precursors of membrane lipids and lipid mediators. Catalyzes the saturation step of the sphingosine 1-phosphate metabolic pathway, the conversion of trans-2-hexadecenoyl-CoA to palmitoyl-CoA. This chain is Very-long-chain enoyl-CoA reductase (Tecr), found in Rattus norvegicus (Rat).